The sequence spans 491 residues: NADH-quinone oxidoreductase subunit N (491 aa).

14 consecutive transmembrane segments (helical) span residues 6–26 (TLAPVAPIIFLAIAIAAINWI), 37–57 (VAYPLSLLTTLVLTAWFGMNA), 69–89 (LVVIDPMANVLSAFCAAGLFV), 103–123 (MFAGEFYMLALFTLGGQIVMI), 128–148 (FLTLYLGLELLSLSSYALVAL), 163–183 (FVLGALASGFLLYGISMMYGA), 206–226 (LAFGVVFIVAGLSFKLGAAPF), 238–258 (PTAVTLLIAGGPKVAAFALFI), 273–293 (QMMLVVLSIISLAIGNLTAIV), 301–321 (LAYSTISHMGFVLLGLLSGVV), 335–355 (AMFYSVTYLLTTLGTFGIILL), 379–399 (FAFLMLVMMFSLAGIPPTVGF), 413–433 (GMTWLAVVAVLFSLIGAFYYL), and 458–478 (SMLSVNGAAVILLGLFPAALM).

The protein belongs to the complex I subunit 2 family. In terms of assembly, NDH-1 is composed of 14 different subunits. Subunits NuoA, H, J, K, L, M, N constitute the membrane sector of the complex.

Its subcellular location is the cell inner membrane. It catalyses the reaction a quinone + NADH + 5 H(+)(in) = a quinol + NAD(+) + 4 H(+)(out). NDH-1 shuttles electrons from NADH, via FMN and iron-sulfur (Fe-S) centers, to quinones in the respiratory chain. The immediate electron acceptor for the enzyme in this species is believed to be ubiquinone. Couples the redox reaction to proton translocation (for every two electrons transferred, four hydrogen ions are translocated across the cytoplasmic membrane), and thus conserves the redox energy in a proton gradient. This chain is NADH-quinone oxidoreductase subunit N, found in Cupriavidus taiwanensis (strain DSM 17343 / BCRC 17206 / CCUG 44338 / CIP 107171 / LMG 19424 / R1) (Ralstonia taiwanensis (strain LMG 19424)).